Here is a 1278-residue protein sequence, read N- to C-terminus: Alpha-glucan water dikinase 2 (1278 aa).

Residues 1 to 23 form the signal peptide; sequence MATSKSQQFQLIEGMELQITVTG. The active-site Tele-phosphohistidine intermediate is H886.

It belongs to the PEP-utilizing enzyme family. As to quaternary structure, homodimer. Requires Mg(2+) as cofactor.

It carries out the reaction [(1-&gt;4)-alpha-D-glucosyl](n) + n ATP + n H2O = [(1-&gt;4)-6-phospho-alpha-D-glucosyl](n) + n AMP + n phosphate + 2n H(+). Its function is as follows. Mediates the incorporation of phosphate into alpha-glucan, mostly at the C-6 position of glucose units. This is Alpha-glucan water dikinase 2 (GWD2) from Arabidopsis thaliana (Mouse-ear cress).